The primary structure comprises 715 residues: ABC transporter F family member 3 (715 aa).

Threonine 2 is modified (N-acetylthreonine). The disordered stretch occupies residues 96–118 (VRMNDGMDDGPVKKKKPEPVDGP). 2 consecutive ABC transporter domains span residues 175-436 (IHMD…KNQQ) and 504-713 (ISFS…LLQS). Residues 207–214 (GRNGTGKT) and 537–544 (GPNGIGKS) contribute to the ATP site.

Belongs to the ABC transporter superfamily. ABCF family. EF3 (TC 3.A.1.121) subfamily.

The chain is ABC transporter F family member 3 (ABCF3) from Arabidopsis thaliana (Mouse-ear cress).